A 149-amino-acid polypeptide reads, in one-letter code: Transcription antitermination protein NusB (149 aa).

Belongs to the NusB family.

Functionally, involved in transcription antitermination. Required for transcription of ribosomal RNA (rRNA) genes. Binds specifically to the boxA antiterminator sequence of the ribosomal RNA (rrn) operons. In Caulobacter vibrioides (strain ATCC 19089 / CIP 103742 / CB 15) (Caulobacter crescentus), this protein is Transcription antitermination protein NusB.